The primary structure comprises 380 residues: Chaperone protein DnaJ (380 aa).

The J domain occupies 5–70 (DYYEILGVAK…QKRAAYDQYG (66 aa)). The CR-type zinc-finger motif lies at 135–213 (GVSKEIRIPT…CHGHGRVEKS (79 aa)). Zn(2+) is bound by residues Cys148, Cys151, Cys165, Cys168, Cys187, Cys190, Cys201, and Cys204. CXXCXGXG motif repeat units follow at residues 148 to 155 (CGVCHGSG), 165 to 172 (CSTCHGAG), 187 to 194 (CPTCHGRG), and 201 to 208 (CNACHGHG).

The protein belongs to the DnaJ family. As to quaternary structure, homodimer. Zn(2+) serves as cofactor.

It is found in the cytoplasm. In terms of biological role, participates actively in the response to hyperosmotic and heat shock by preventing the aggregation of stress-denatured proteins and by disaggregating proteins, also in an autonomous, DnaK-independent fashion. Unfolded proteins bind initially to DnaJ; upon interaction with the DnaJ-bound protein, DnaK hydrolyzes its bound ATP, resulting in the formation of a stable complex. GrpE releases ADP from DnaK; ATP binding to DnaK triggers the release of the substrate protein, thus completing the reaction cycle. Several rounds of ATP-dependent interactions between DnaJ, DnaK and GrpE are required for fully efficient folding. Also involved, together with DnaK and GrpE, in the DNA replication of plasmids through activation of initiation proteins. The polypeptide is Chaperone protein DnaJ (Erwinia tasmaniensis (strain DSM 17950 / CFBP 7177 / CIP 109463 / NCPPB 4357 / Et1/99)).